Reading from the N-terminus, the 49-residue chain is Light-harvesting protein B-880 alpha chain (49 aa).

The Cytoplasmic portion of the chain corresponds to 1-12 (MYKLWLLFDPRR). The chain crosses the membrane as a helical span at residues 13 to 33 (TLVALSAFLFVLGLIIHFISL). His-29 is an a bacteriochlorophyll binding site. Residues 34–49 (STDRFNWLEGKPAVRA) are Periplasmic-facing.

Belongs to the antenna complex alpha subunit family. In terms of assembly, the core complex is formed by different alpha and beta chains, binding bacteriochlorophyll molecules, and arranged most probably in tetrameric structures disposed around the reaction center. The non-pigmented gamma chains may constitute additional components.

The protein resides in the cell inner membrane. Antenna complexes are light-harvesting systems, which transfer the excitation energy to the reaction centers. This chain is Light-harvesting protein B-880 alpha chain, found in Rhodoblastus acidophilus (Rhodopseudomonas acidophila).